The following is a 303-amino-acid chain: Large ribosomal subunit protein uL1m (303 aa).

The protein belongs to the universal ribosomal protein uL1 family. As to quaternary structure, component of the mitochondrial large ribosomal subunit (mt-LSU). Mature N.crassa 74S mitochondrial ribosomes consist of a small (37S) and a large (54S) subunit. The 37S small subunit contains a 16S ribosomal RNA (16S mt-rRNA) and 32 different proteins. The 54S large subunit contains a 23S rRNA (23S mt-rRNA) and 42 different proteins.

It localises to the mitochondrion. Functionally, component of the mitochondrial ribosome (mitoribosome), a dedicated translation machinery responsible for the synthesis of mitochondrial genome-encoded proteins, including at least some of the essential transmembrane subunits of the mitochondrial respiratory chain. The mitoribosomes are attached to the mitochondrial inner membrane and translation products are cotranslationally integrated into the membrane. The protein is Large ribosomal subunit protein uL1m (mrpl1) of Neurospora crassa (strain ATCC 24698 / 74-OR23-1A / CBS 708.71 / DSM 1257 / FGSC 987).